The primary structure comprises 439 residues: uncharacterized protein (439 aa).

In terms of domain architecture, VWFA spans 273–439 (PIIILLDHSG…EARKIYKSIS (167 aa)).

This is an uncharacterized protein from Methanocaldococcus jannaschii (strain ATCC 43067 / DSM 2661 / JAL-1 / JCM 10045 / NBRC 100440) (Methanococcus jannaschii).